The following is a 1018-amino-acid chain: Calcium-transporting ATPase sarcoplasmic/endoplasmic reticulum type (1018 aa).

Topologically, residues 1–48 are cytoplasmic; it reads MEDGHSKTVDEVLSHFRVDPERGLSLDQVKEYQKKYGPNELPAEEGKT. Residues 49–69 traverse the membrane as a helical segment; sequence LWQLVLEQFDDLLVKILLLAA. The Lumenal segment spans residues 70–88; that stretch reads IISFVLALFEEHEGVEAFV. The helical transmembrane segment at 89-109 threads the bilayer; that stretch reads EPFVILLILIANAVVGVWQER. At 110–252 the chain is on the cytoplasmic side; the sequence is NAESAIEALK…EIKTPLQQKL (143 aa). Residues 253-272 traverse the membrane as a helical segment; that stretch reads DEFGEQLSKVISLICVAVWA. Residues 273-294 are Lumenal-facing; it reads INIGHFNDPAHGGSWIKGAVYY. The helical transmembrane segment at 295–312 threads the bilayer; it reads FKIAVALAVAAIPEGLPA. Val-303, Ala-304, Ile-306, and Glu-308 together coordinate Ca(2+). The Cytoplasmic segment spans residues 313 to 756; sequence VITTCLALGT…EEGRAIYNNM (444 aa). Asp-350 (4-aspartylphosphate intermediate) is an active-site residue. The Mg(2+) site is built by Asp-702 and Asp-706. A helical transmembrane segment spans residues 757-776; the sequence is KQFIRYLISSNIGEVVSIFL. Ca(2+) contacts are provided by Asn-767 and Glu-770. At 777–786 the chain is on the lumenal side; that stretch reads TAALGLPEAL. A helical transmembrane segment spans residues 787 to 807; that stretch reads IPVQLLWVNLVTDGLPATALG. Asn-795, Thr-798, and Asp-799 together coordinate Ca(2+). The Cytoplasmic segment spans residues 808 to 827; that stretch reads FNPPDLDIMTKPPRKADEGL. A helical membrane pass occupies residues 828–850; it reads ISGWLFFRYMAIGGYVGCATVGG. Over 851-896 the chain is Lumenal; it reads AAWWFMFSETGPQLSYWQLTHHLSCLGGGEEFKGIDCKIFNDPHPM. A helical membrane pass occupies residues 897 to 916; the sequence is TMALSVLVTIEMLNAMNSLS. Glu-907 provides a ligand contact to Ca(2+). Residues 917-929 are Cytoplasmic-facing; that stretch reads ENQSLVQMPPWCN. A helical membrane pass occupies residues 930–948; the sequence is IWLIASMCLSFALHFVILY. The Lumenal portion of the chain corresponds to 949-963; it reads VDVLSTVFQVTPLDG. A helical transmembrane segment spans residues 964–984; sequence NEWMTVMKFSLPVVLLDEILK. Topologically, residues 985–1018 are cytoplasmic; the sequence is FVARRISDGESYIKNMHGLVLAWAVFFAYIIWGP.

This sequence belongs to the cation transport ATPase (P-type) (TC 3.A.3) family.

The protein resides in the endoplasmic reticulum membrane. The protein localises to the sarcoplasmic reticulum membrane. The enzyme catalyses Ca(2+)(in) + ATP + H2O = Ca(2+)(out) + ADP + phosphate + H(+). Its function is as follows. This magnesium-dependent enzyme catalyzes the hydrolysis of ATP coupled with the transport of calcium. This is Calcium-transporting ATPase sarcoplasmic/endoplasmic reticulum type from Anopheles gambiae (African malaria mosquito).